The chain runs to 301 residues: Polyamine aminopropyltransferase (301 aa).

The 237-residue stretch at 4 to 240 (WHWLLEWQTP…GLWGFVYGGV (237 aa)) folds into the PABS domain. S-methyl-5'-thioadenosine is bound at residue Gln33. The spermidine site is built by His64 and Glu89. Residues Asp109 and 141-142 (DG) contribute to the S-methyl-5'-thioadenosine site. The active-site Proton acceptor is the Asp159.

The protein belongs to the spermidine/spermine synthase family. Homodimer or homotetramer.

It localises to the cytoplasm. It carries out the reaction S-adenosyl 3-(methylsulfanyl)propylamine + putrescine = S-methyl-5'-thioadenosine + spermidine + H(+). Its pathway is amine and polyamine biosynthesis; spermidine biosynthesis; spermidine from putrescine: step 1/1. Its function is as follows. Catalyzes the irreversible transfer of a propylamine group from the amino donor S-adenosylmethioninamine (decarboxy-AdoMet) to putrescine (1,4-diaminobutane) to yield spermidine. This is Polyamine aminopropyltransferase from Saccharolobus islandicus (strain L.S.2.15 / Lassen #1) (Sulfolobus islandicus).